The sequence spans 211 residues: Peptidyl-tRNA hydrolase (211 aa).

TRNA is bound at residue tyrosine 15. Histidine 20 functions as the Proton acceptor in the catalytic mechanism. Residues phenylalanine 66, asparagine 68, and asparagine 114 each coordinate tRNA. The disordered stretch occupies residues threonine 189–aspartate 211. Residues threonine 197–aspartate 211 are compositionally biased toward low complexity.

It belongs to the PTH family. Monomer.

It is found in the cytoplasm. It catalyses the reaction an N-acyl-L-alpha-aminoacyl-tRNA + H2O = an N-acyl-L-amino acid + a tRNA + H(+). Functionally, hydrolyzes ribosome-free peptidyl-tRNAs (with 1 or more amino acids incorporated), which drop off the ribosome during protein synthesis, or as a result of ribosome stalling. Catalyzes the release of premature peptidyl moieties from peptidyl-tRNA molecules trapped in stalled 50S ribosomal subunits, and thus maintains levels of free tRNAs and 50S ribosomes. This Acidovorax ebreus (strain TPSY) (Diaphorobacter sp. (strain TPSY)) protein is Peptidyl-tRNA hydrolase.